Reading from the N-terminus, the 325-residue chain is Small ribosomal subunit protein RACK1 (325 aa).

WD repeat units follow at residues 13 to 44 (AHTD…ILWH), 61 to 91 (GHSH…RLWD), 103 to 133 (GHTK…KLWN), 147 to 179 (AHSD…KVWN), 191 to 221 (GHSG…LLWD), 232 to 261 (DAGS…KIWD), and 291 to 321 (KKVI…RVWG).

This sequence belongs to the WD repeat G protein beta family. Ribosomal protein RACK1 subfamily.

Its function is as follows. Plays a role in hormone-mediated cell division. The sequence is that of Small ribosomal subunit protein RACK1 (GB1) from Medicago sativa (Alfalfa).